Consider the following 399-residue polypeptide: Nicotinate phosphoribosyltransferase 1 (399 aa).

A Phosphohistidine; by autocatalysis modification is found at His-224.

The protein belongs to the NAPRTase family. Transiently phosphorylated on a His residue during the reaction cycle. Phosphorylation strongly increases the affinity for substrates and increases the rate of nicotinate D-ribonucleotide production. Dephosphorylation regenerates the low-affinity form of the enzyme, leading to product release.

The catalysed reaction is nicotinate + 5-phospho-alpha-D-ribose 1-diphosphate + ATP + H2O = nicotinate beta-D-ribonucleotide + ADP + phosphate + diphosphate. It functions in the pathway cofactor biosynthesis; NAD(+) biosynthesis; nicotinate D-ribonucleotide from nicotinate: step 1/1. In terms of biological role, catalyzes the synthesis of beta-nicotinate D-ribonucleotide from nicotinate and 5-phospho-D-ribose 1-phosphate at the expense of ATP. The protein is Nicotinate phosphoribosyltransferase 1 of Pseudomonas aeruginosa (strain ATCC 15692 / DSM 22644 / CIP 104116 / JCM 14847 / LMG 12228 / 1C / PRS 101 / PAO1).